The chain runs to 146 residues: Putative actin-depolymerizing factor 8 (146 aa).

An ADF-H domain is found at proline 14–asparagine 144.

The protein belongs to the actin-binding proteins ADF family.

Functionally, actin-depolymerizing protein. Severs actin filaments (F-actin) and binds to actin monomers. This chain is Putative actin-depolymerizing factor 8 (ADF8), found in Oryza sativa subsp. japonica (Rice).